Reading from the N-terminus, the 149-residue chain is Calmodulin-6 (149 aa).

EF-hand domains follow at residues D8 to N43, P44 to D79, D81 to K116, and L117 to K149. D21, D23, D25, C27, E32, D57, D59, N61, T63, E68, D94, D96, N98, E105, D130, D132, D134, Q136, and E141 together coordinate Ca(2+).

This sequence belongs to the calmodulin family. In terms of assembly, interacts with KCBP.

Its function is as follows. Calmodulin mediates the control of a large number of enzymes, ion channels and other proteins by Ca(2+). Among the enzymes to be stimulated by the calmodulin-Ca(2+) complex are a number of protein kinases and phosphatases. This chain is Calmodulin-6 (CAM6), found in Arabidopsis thaliana (Mouse-ear cress).